A 499-amino-acid chain; its full sequence is Aprataxin and PNK-like factor (499 aa).

Residues 1 to 108 form the FHA-like domain; the sequence is MPSDFFLQPL…RVFSAESEVE (108 aa). At Ser116 the chain carries Phosphoserine; by ATM. 3 disordered regions span residues 134-183, 197-292, and 305-358; these read VNLP…TQRK, DQSL…KTNK, and VSKH…DTAD. Residues 141–152 show a composition bias toward polar residues; that stretch reads TGASQLQGSPEI. The residue at position 149 (Ser149) is a Phosphoserine. A KBM motif is present at residues 182–191; the sequence is RKRILPAWML. Residues 239 to 248 are compositionally biased toward polar residues; the sequence is PSGNSKSVSA. Residues 251–261 are compositionally biased toward basic and acidic residues; it reads DPGKKCRKADQ. The span at 264–278 shows a compositional bias: low complexity; it reads PGVSSENVPESSSSN. Positions 281–292 are enriched in basic and acidic residues; it reads KDPDVDIVKTNK. A compositionally biased stretch (low complexity) spans 340 to 349; sequence PESSSAPSSP. 4 residues coordinate a glycoprotein: Arg371, Tyr376, Tyr381, and Arg382. The PBZ-type 1 zinc finger occupies 372–393; sequence TACMYGANCYRRNPLHFQHFSH. The interval 401-411 is flexible linker; sequence EVHGTDEGVIG. Residues 414–435 form a PBZ-type 2 zinc finger; it reads PECPYGASCYRKNPQHKMEYRH. Residues Tyr418, Tyr423, and Arg424 each coordinate a glycoprotein. Positions 440 to 499 are disordered; it reads ARVALDEDDDDVGQPSDDEDEEDYEPTDEDSDWHPGKDDEEQEDVDELLKEAKSSLHLKH. A compositionally biased stretch (acidic residues) spans 445 to 470; the sequence is DEDDDDVGQPSDDEDEEDYEPTDEDS. An NAP1L motif motif is present at residues 463–487; the sequence is YEPTDEDSDWHPGKDDEEQEDVDEL.

The protein belongs to the APLF family. In terms of assembly, interacts with LIG4. Interacts with PARP1. Interacts with XRCC4. Interacts (via KBM motif) with XRCC5 and XRCC6; promoting recruitment to DNA damage sites. Interacts with XRCC1. Interacts (via C-terminal disordered region) with histones; interacts with histone H2A, H2B and H3-H4. Post-translationally, poly-ADP-ribosylated. In addition to binding non covalently poly-ADP-ribose via its PBZ-type zinc fingers, the protein is also covalently poly-ADP-ribosylated by PARP1. Phosphorylated in an ATM-dependent manner upon double-strand DNA break.

Its subcellular location is the nucleus. The protein localises to the chromosome. It is found in the cytoplasm. It localises to the cytosol. In terms of biological role, histone chaperone involved in single-strand and double-strand DNA break repair. Recruited to sites of DNA damage through interaction with branched poly-ADP-ribose chains, a polymeric post-translational modification synthesized transiently at sites of chromosomal damage to accelerate DNA strand break repair reactions. Following recruitment to DNA damage sites, acts as a histone chaperone that mediates histone eviction during DNA repair and promotes recruitment of histone variant MACROH2A1. Also has a nuclease activity: displays apurinic-apyrimidinic (AP) endonuclease and 3'-5' exonuclease activities in vitro. Also able to introduce nicks at hydroxyuracil and other types of pyrimidine base damage. Together with PARP3, promotes the retention of the LIG4-XRCC4 complex on chromatin and accelerate DNA ligation during non-homologous end-joining (NHEJ). Also acts as a negative regulator of cell pluripotency by promoting histone exchange. Required for the embryo implantation during the epithelial to mesenchymal transition in females. In Mus musculus (Mouse), this protein is Aprataxin and PNK-like factor (Aplf).